Here is a 155-residue protein sequence, read N- to C-terminus: Endoribonuclease YbeY (155 aa).

The Zn(2+) site is built by His-114, His-118, and His-124.

Belongs to the endoribonuclease YbeY family. Requires Zn(2+) as cofactor.

It is found in the cytoplasm. Single strand-specific metallo-endoribonuclease involved in late-stage 70S ribosome quality control and in maturation of the 3' terminus of the 16S rRNA. The protein is Endoribonuclease YbeY of Salmonella arizonae (strain ATCC BAA-731 / CDC346-86 / RSK2980).